A 220-amino-acid chain; its full sequence is MERYAAALEEVADGARQQERHYQLLSALQSLVKELPSSFQQRLSYTTLSDLALALLDGTVFEIVQGLLEIQHLTEKSLYNQRLRLQNEHRVLRQALRQKHQEAQQACRPHNLPVVQAAQQRELEAVEHRIREEQRAMDQKIILELDRKVADQQSTLEKAGVAGFYVTTNPQELMLQMNLLELIRKLQQRGCRAGNAALGLGGPWQSPAAQCDQKGSPVPP.

The stretch at 76–159 forms a coiled coil; sequence KSLYNQRLRL…ADQQSTLEKA (84 aa).

This sequence belongs to the gonadal family. In terms of tissue distribution, widely expressed in fetal and adult tissues. Highest expression in liver, heart and skeletal muscle. Lower levels in pancreas and placenta. Weak expression in brain.

It is found in the nucleus. Its function is as follows. May play a role in neural crest cell migration into the third and fourth pharyngeal pouches. The chain is Protein DGCR6L (DGCR6L) from Homo sapiens (Human).